A 427-amino-acid polypeptide reads, in one-letter code: Ribosomal protein uS12 methylthiotransferase RimO (427 aa).

The 116-residue stretch at 1-116 folds into the MTTase N-terminal domain; that stretch reads MNFYVEVLGC…IATHIGKRNV (116 aa). The [4Fe-4S] cluster site is built by C10, C46, C79, C145, C149, and C152. The region spanning 131 to 360 is the Radical SAM core domain; the sequence is VDNGQYAYVK…MDIQSQISFE (230 aa). A TRAM domain is found at 363 to 426; that stretch reads EKLVGKKLKV…IYDLEGEIVE (64 aa).

The protein belongs to the methylthiotransferase family. RimO subfamily. The cofactor is [4Fe-4S] cluster.

Its subcellular location is the cytoplasm. The catalysed reaction is L-aspartate(89)-[ribosomal protein uS12]-hydrogen + (sulfur carrier)-SH + AH2 + 2 S-adenosyl-L-methionine = 3-methylsulfanyl-L-aspartate(89)-[ribosomal protein uS12]-hydrogen + (sulfur carrier)-H + 5'-deoxyadenosine + L-methionine + A + S-adenosyl-L-homocysteine + 2 H(+). Catalyzes the methylthiolation of an aspartic acid residue of ribosomal protein uS12. This Thermosipho melanesiensis (strain DSM 12029 / CIP 104789 / BI429) protein is Ribosomal protein uS12 methylthiotransferase RimO.